Consider the following 383-residue polypeptide: Aliphatic nitrilase (383 aa).

The CN hydrolase domain occupies V13 to L288. The active-site Proton acceptor is E53. K136 (proton donor) is an active-site residue. The Nucleophile role is filled by C170. The segment at A359–A383 is disordered.

It belongs to the carbon-nitrogen hydrolase superfamily. Nitrilase family.

The catalysed reaction is an aliphatic nitrile + 2 H2O = a carboxylate + NH4(+). Its function is as follows. Acts on aliphatic nitriles such as acrylonitrile, crotononitrile and glutaronitrile. The sequence is that of Aliphatic nitrilase from Rhodococcus rhodochrous.